Reading from the N-terminus, the 254-residue chain is 5'/3'-nucleotidase SurE (254 aa).

A divalent metal cation-binding residues include Asp-9, Asp-10, Ser-40, and Asn-93.

It belongs to the SurE nucleotidase family. A divalent metal cation is required as a cofactor.

It localises to the cytoplasm. It catalyses the reaction a ribonucleoside 5'-phosphate + H2O = a ribonucleoside + phosphate. It carries out the reaction a ribonucleoside 3'-phosphate + H2O = a ribonucleoside + phosphate. The catalysed reaction is [phosphate](n) + H2O = [phosphate](n-1) + phosphate + H(+). Nucleotidase with a broad substrate specificity as it can dephosphorylate various ribo- and deoxyribonucleoside 5'-monophosphates and ribonucleoside 3'-monophosphates with highest affinity to 3'-AMP. Also hydrolyzes polyphosphate (exopolyphosphatase activity) with the preference for short-chain-length substrates (P20-25). Might be involved in the regulation of dNTP and NTP pools, and in the turnover of 3'-mononucleotides produced by numerous intracellular RNases (T1, T2, and F) during the degradation of various RNAs. The protein is 5'/3'-nucleotidase SurE of Yersinia pseudotuberculosis serotype O:1b (strain IP 31758).